The chain runs to 415 residues: Phosphoglycerate kinase (415 aa).

Substrate-binding positions include D27–N29, R44, H67–R70, R124, and R164. ATP contacts are provided by residues E336 and G362 to M365.

The protein belongs to the phosphoglycerate kinase family. In terms of assembly, monomer.

Its subcellular location is the cytoplasm. It carries out the reaction (2R)-3-phosphoglycerate + ATP = (2R)-3-phospho-glyceroyl phosphate + ADP. It participates in carbohydrate degradation; glycolysis; pyruvate from D-glyceraldehyde 3-phosphate: step 2/5. This chain is Phosphoglycerate kinase, found in Sulfurisphaera tokodaii (strain DSM 16993 / JCM 10545 / NBRC 100140 / 7) (Sulfolobus tokodaii).